We begin with the raw amino-acid sequence, 202 residues long: Holliday junction branch migration complex subunit RuvA (202 aa).

Residues Met-1–Thr-62 are domain I. The tract at residues Arg-63–Thr-141 is domain II. The tract at residues Thr-141–Pro-145 is flexible linker. The tract at residues Ala-146–Asp-202 is domain III.

The protein belongs to the RuvA family. In terms of assembly, homotetramer. Forms an RuvA(8)-RuvB(12)-Holliday junction (HJ) complex. HJ DNA is sandwiched between 2 RuvA tetramers; dsDNA enters through RuvA and exits via RuvB. An RuvB hexamer assembles on each DNA strand where it exits the tetramer. Each RuvB hexamer is contacted by two RuvA subunits (via domain III) on 2 adjacent RuvB subunits; this complex drives branch migration. In the full resolvosome a probable DNA-RuvA(4)-RuvB(12)-RuvC(2) complex forms which resolves the HJ.

It localises to the cytoplasm. Functionally, the RuvA-RuvB-RuvC complex processes Holliday junction (HJ) DNA during genetic recombination and DNA repair, while the RuvA-RuvB complex plays an important role in the rescue of blocked DNA replication forks via replication fork reversal (RFR). RuvA specifically binds to HJ cruciform DNA, conferring on it an open structure. The RuvB hexamer acts as an ATP-dependent pump, pulling dsDNA into and through the RuvAB complex. HJ branch migration allows RuvC to scan DNA until it finds its consensus sequence, where it cleaves and resolves the cruciform DNA. This Moorella thermoacetica (strain ATCC 39073 / JCM 9320) protein is Holliday junction branch migration complex subunit RuvA.